The primary structure comprises 496 residues: Transmembrane protein 104 (496 aa).

Topologically, residues 1–10 (MAGEITETGE) are cytoplasmic. The helical transmembrane segment at 11-31 (LYSSYVGLVYMFNLIVGTGAL) threads the bilayer. Topologically, residues 32–36 (TMPKA) are extracellular. The chain crosses the membrane as a helical span at residues 37 to 57 (FATAGWLVSLVLLVFLGFMSF). Over 58-146 (VTTTFVIEAM…SMFFNKVGVN (89 aa)) the chain is Cytoplasmic. The chain crosses the membrane as a helical span at residues 147 to 167 (LFYFCIIVYLYGDLAIYAAAV). The Extracellular portion of the chain corresponds to 168 to 204 (PFSLMQVTCSATGNDSCGVEADTKYNDTDRCWGPLRR). Asparagine 193 carries an N-linked (GlcNAc...) asparagine glycan. The chain crosses the membrane as a helical span at residues 205-225 (VDAYRIYLAIFTLLLGPFTFF). The Cytoplasmic segment spans residues 226-233 (DVQKTKYL). Residues 234–254 (QILTSLMRWIAFAVMIVLALI) traverse the membrane as a helical segment. Residues 255 to 276 (RIGHGQGEGHPPLADFSGVRNL) are Extracellular-facing. A helical membrane pass occupies residues 277 to 297 (FGVCVYSFMCQHSLPSLITPV). Residues 298 to 306 (SSKRHLTRL) are Cytoplasmic-facing. A helical membrane pass occupies residues 307 to 327 (VFLDYVLILAFYGLLSFTAIF). Over 328–354 (CFRGDSLMDMYTLNFARCDVVGLAAVR) the chain is Extracellular. Residues 355 to 375 (FFLGLFPVFTISTNFPIIAVT) form a helical membrane-spanning segment. Over 376-397 (LRNNWKTLFHREGGTYPWVVDR) the chain is Cytoplasmic. Residues 398 to 418 (VVFPTITLVPPVLVAFCTHDL) form a helical membrane-spanning segment. Topologically, residues 419 to 421 (ESL) are extracellular. Residues 422–442 (VGITGAYAGTGIQYVIPAFLV) traverse the membrane as a helical segment. At 443-470 (YHCRRDTQLAFGCGVSNKHRSPFRHTFW) the chain is on the cytoplasmic side. The chain crosses the membrane as a helical span at residues 471-491 (VGFVLLWAFSCFIFVTANIIL). Residues 492–496 (SETKL) are Extracellular-facing.

The protein belongs to the TMEM104 family.

It is found in the membrane. This is Transmembrane protein 104 (TMEM104) from Homo sapiens (Human).